The primary structure comprises 72 residues: MKKDIHPKAVPTKIIYQGKVVMETLSTRPEIHVDVWSGVHPFWTGEERFVDTEGRVDKFNKRFGDSYRNKKK.

This sequence belongs to the bacterial ribosomal protein bL31 family. Type A subfamily. Part of the 50S ribosomal subunit.

In terms of biological role, binds the 23S rRNA. This Deinococcus deserti (strain DSM 17065 / CIP 109153 / LMG 22923 / VCD115) protein is Large ribosomal subunit protein bL31.